The sequence spans 261 residues: Calbindin (261 aa).

Ala2 is modified (N-acetylalanine). The segment at 2-7 (AESHLQ) is interaction with RANBP9. 5 EF-hand domains span residues 11–46 (ITAS…LLQA), 53–88 (ELSP…EENF), 98–133 (KSCE…LLEK), 142–177 (KLAE…QENF), and 186–221 (MCGK…LCEK). Ca(2+) contacts are provided by Asp24, Asp26, Ser28, Tyr30, and Glu35. Ca(2+) contacts are provided by Asp111, Asp113, Ser115, Glu122, Asp155, Asn157, Asp159, Lys161, Glu166, Asp199, Asp201, Asn203, Tyr205, and Glu210.

Belongs to the calbindin family. Interacts with RANBP9. Expressed in the modiolar nerve root and in bushy neurons in the ventral cochlear nucleus (at protein level).

Buffers cytosolic calcium. May stimulate a membrane Ca(2+)-ATPase and a 3',5'-cyclic nucleotide phosphodiesterase. The sequence is that of Calbindin (Calb1) from Mus musculus (Mouse).